Here is a 396-residue protein sequence, read N- to C-terminus: CCA-adding enzyme (396 aa).

Residues G32 and R35 each contribute to the ATP site. CTP contacts are provided by G32 and R35. Mg(2+)-binding residues include D45 and D47. Residues R116, D159, R162, R165, and R168 each coordinate ATP. Residues R116, D159, R162, R165, and R168 each coordinate CTP.

This sequence belongs to the tRNA nucleotidyltransferase/poly(A) polymerase family. Bacterial CCA-adding enzyme type 3 subfamily. In terms of assembly, homodimer. It depends on Mg(2+) as a cofactor.

It catalyses the reaction a tRNA precursor + 2 CTP + ATP = a tRNA with a 3' CCA end + 3 diphosphate. It carries out the reaction a tRNA with a 3' CCA end + 2 CTP + ATP = a tRNA with a 3' CCACCA end + 3 diphosphate. Catalyzes the addition and repair of the essential 3'-terminal CCA sequence in tRNAs without using a nucleic acid template. Adds these three nucleotides in the order of C, C, and A to the tRNA nucleotide-73, using CTP and ATP as substrates and producing inorganic pyrophosphate. tRNA 3'-terminal CCA addition is required both for tRNA processing and repair. Also involved in tRNA surveillance by mediating tandem CCA addition to generate a CCACCA at the 3' terminus of unstable tRNAs. While stable tRNAs receive only 3'-terminal CCA, unstable tRNAs are marked with CCACCA and rapidly degraded. This Lactobacillus delbrueckii subsp. bulgaricus (strain ATCC BAA-365 / Lb-18) protein is CCA-adding enzyme.